Reading from the N-terminus, the 148-residue chain is Single-stranded DNA-binding protein, mitochondrial (148 aa).

A mitochondrion-targeting transit peptide spans 1–16; sequence MFRRPVVQVLRQFVRH. Residues 30 to 141 enclose the SSB domain; the sequence is LNRVQLLGRV…IIADNIIFLS (112 aa). 2 positions are modified to phosphoserine: serine 67 and serine 79. The residue at position 113 (lysine 113) is an N6-acetyllysine. Residue lysine 122 is modified to N6-succinyllysine.

In terms of assembly, homotetramer. Interacts with MPG/AAG, through inhibition of its glycosylase activity it potentially prevents formation of DNA breaks in ssDNA, ensuring that base removal primarily occurs in dsDNA. Interacts with POLDIP2. Interacts with PRIMPOL.

The protein localises to the mitochondrion. The protein resides in the mitochondrion matrix. It localises to the mitochondrion nucleoid. Binds preferentially and cooperatively to pyrimidine rich single-stranded DNA (ss-DNA). In vitro, required to maintain the copy number of mitochondrial DNA (mtDNA) and plays a crucial role during mtDNA replication by stimulating the activity of the replisome components POLG and TWNK at the replication fork. Promotes the activity of the gamma complex polymerase POLG, largely by organizing the template DNA and eliminating secondary structures to favor ss-DNA conformations that facilitate POLG activity. In addition it is able to promote the 5'-3' unwinding activity of the mtDNA helicase TWNK. May also function in mtDNA repair. The chain is Single-stranded DNA-binding protein, mitochondrial (SSBP1) from Bos taurus (Bovine).